The chain runs to 267 residues: Glutamate racemase (267 aa).

Residues 9–10 (DS) and 41–42 (YG) contribute to the substrate site. Cys-72 functions as the Proton donor/acceptor in the catalytic mechanism. A substrate-binding site is contributed by 73–74 (NT). Cys-184 serves as the catalytic Proton donor/acceptor. Residue 185-186 (TH) participates in substrate binding.

Belongs to the aspartate/glutamate racemases family.

The catalysed reaction is L-glutamate = D-glutamate. Its pathway is cell wall biogenesis; peptidoglycan biosynthesis. In terms of biological role, provides the (R)-glutamate required for cell wall biosynthesis. In Staphylococcus epidermidis (strain ATCC 12228 / FDA PCI 1200), this protein is Glutamate racemase.